A 346-amino-acid polypeptide reads, in one-letter code: N-acetyl-gamma-glutamyl-phosphate reductase (346 aa).

Cys149 is an active-site residue.

Belongs to the NAGSA dehydrogenase family. Type 1 subfamily.

The protein localises to the cytoplasm. The catalysed reaction is N-acetyl-L-glutamate 5-semialdehyde + phosphate + NADP(+) = N-acetyl-L-glutamyl 5-phosphate + NADPH + H(+). The protein operates within amino-acid biosynthesis; L-arginine biosynthesis; N(2)-acetyl-L-ornithine from L-glutamate: step 3/4. In terms of biological role, catalyzes the NADPH-dependent reduction of N-acetyl-5-glutamyl phosphate to yield N-acetyl-L-glutamate 5-semialdehyde. The chain is N-acetyl-gamma-glutamyl-phosphate reductase from Citrifermentans bemidjiense (strain ATCC BAA-1014 / DSM 16622 / JCM 12645 / Bem) (Geobacter bemidjiensis).